The following is a 71-amino-acid chain: uncharacterized protein (71 aa).

The protein localises to the plastid. The protein resides in the chloroplast. This is an uncharacterized protein from Mesostigma viride (Green alga).